The primary structure comprises 338 residues: Ketol-acid reductoisomerase (NADP(+)) (338 aa).

Positions 1 to 181 constitute a KARI N-terminal Rossmann domain; sequence MKVYYDKDAD…GGGRTGIIET (181 aa). NADP(+)-binding positions include 24 to 27, R47, S50, S52, and 82 to 85; these read YGSQ and DEFQ. H107 is a catalytic residue. G133 is a binding site for NADP(+). Residues 182-327 enclose the KARI C-terminal knotted domain; the sequence is TFKDETETDL…AKLRSMMPWI (146 aa). Mg(2+) contacts are provided by D190, E194, E226, and E230. Residue S251 coordinates substrate.

This sequence belongs to the ketol-acid reductoisomerase family. Mg(2+) serves as cofactor.

The enzyme catalyses (2R)-2,3-dihydroxy-3-methylbutanoate + NADP(+) = (2S)-2-acetolactate + NADPH + H(+). The catalysed reaction is (2R,3R)-2,3-dihydroxy-3-methylpentanoate + NADP(+) = (S)-2-ethyl-2-hydroxy-3-oxobutanoate + NADPH + H(+). The protein operates within amino-acid biosynthesis; L-isoleucine biosynthesis; L-isoleucine from 2-oxobutanoate: step 2/4. It participates in amino-acid biosynthesis; L-valine biosynthesis; L-valine from pyruvate: step 2/4. In terms of biological role, involved in the biosynthesis of branched-chain amino acids (BCAA). Catalyzes an alkyl-migration followed by a ketol-acid reduction of (S)-2-acetolactate (S2AL) to yield (R)-2,3-dihydroxy-isovalerate. In the isomerase reaction, S2AL is rearranged via a Mg-dependent methyl migration to produce 3-hydroxy-3-methyl-2-ketobutyrate (HMKB). In the reductase reaction, this 2-ketoacid undergoes a metal-dependent reduction by NADPH to yield (R)-2,3-dihydroxy-isovalerate. This is Ketol-acid reductoisomerase (NADP(+)) from Thiobacillus denitrificans (strain ATCC 25259 / T1).